A 212-amino-acid chain; its full sequence is Superoxide dismutase [Fe] 1, chloroplastic (212 aa).

An N-acetylalanine modification is found at A2. Residues H35, H87, D169, and H173 each coordinate Fe cation.

This sequence belongs to the iron/manganese superoxide dismutase family. As to quaternary structure, homodimer. Interacts with cpn20/cpn21. Requires Fe cation as cofactor.

Its subcellular location is the cell membrane. It is found in the plastid. It localises to the chloroplast membrane. The protein localises to the chloroplast stroma. It carries out the reaction 2 superoxide + 2 H(+) = H2O2 + O2. Its activity is regulated as follows. Activated by cpn20/cpn21. In terms of biological role, destroys superoxide anion radicals which are normally produced within the cells and which are toxic to biological systems. In Arabidopsis thaliana (Mouse-ear cress), this protein is Superoxide dismutase [Fe] 1, chloroplastic (FSD1).